The sequence spans 115 residues: Probable non-functional T cell receptor beta variable 7-1 (115 aa).

A signal peptide spans 1–21; sequence MGTRLLCWAAICLLGADHTGA. An Ig-like domain is found at 22-115; it reads GVSQSLRHKV…LAVYLCASSS (94 aa).

In terms of assembly, most probably, the alpha-beta TR is not assembled due to incorrect folding of the beta chain. Alpha-beta TR is a heterodimer composed of an alpha and beta chain; disulfide-linked. The alpha-beta TR is associated with the transmembrane signaling CD3 coreceptor proteins to form the TR-CD3 (TcR or TCR). The assembly of alpha-beta TR heterodimers with CD3 occurs in the endoplasmic reticulum where a single alpha-beta TR heterodimer associates with one CD3D-CD3E heterodimer, one CD3G-CD3E heterodimer and one CD247 homodimer forming a stable octameric structure. CD3D-CD3E and CD3G-CD3E heterodimers preferentially associate with TR alpha and TR beta chains, respectively. The association of the CD247 homodimer is the last step of TcR assembly in the endoplasmic reticulum and is required for transport to the cell surface.

The protein resides in the cell membrane. Functionally, probable non-functional open reading frame (ORF) of V region of the variable domain of T cell receptor (TR) beta chain. Non-functional ORF generally cannot participate in the synthesis of a productive T cell receptor (TR) chain due to altered V-(D)-J or switch recombination and/or splicing site (at mRNA level) and/or conserved amino acid change (protein level). Alpha-beta T cell receptors are antigen specific receptors which are essential to the immune response and are present on the cell surface of T lymphocytes. Recognize peptide-major histocompatibility (MH) (pMH) complexes that are displayed by antigen presenting cells (APC), a prerequisite for efficient T cell adaptive immunity against pathogens. Binding of alpha-beta TR to pMH complex initiates TR-CD3 clustering on the cell surface and intracellular activation of LCK that phosphorylates the ITAM motifs of CD3G, CD3D, CD3E and CD247 enabling the recruitment of ZAP70. In turn ZAP70 phosphorylates LAT, which recruits numerous signaling molecules to form the LAT signalosome. The LAT signalosome propagates signal branching to three major signaling pathways, the calcium, the mitogen-activated protein kinase (MAPK) kinase and the nuclear factor NF-kappa-B (NF-kB) pathways, leading to the mobilization of transcription factors that are critical for gene expression and essential for T cell growth and differentiation. The T cell repertoire is generated in the thymus, by V-(D)-J rearrangement. This repertoire is then shaped by intrathymic selection events to generate a peripheral T cell pool of self-MH restricted, non-autoaggressive T cells. Post-thymic interaction of alpha-beta TR with the pMH complexes shapes TR structural and functional avidity. This is Probable non-functional T cell receptor beta variable 7-1 from Homo sapiens (Human).